A 451-amino-acid chain; its full sequence is Sex peptide receptor-related protein 2 (451 aa).

The Extracellular segment spans residues 1–63 (MNYEVYCGNA…DNLEIVVYGQ (63 aa)). A glycan (N-linked (GlcNAc...) asparagine) is linked at asparagine 15. The chain crosses the membrane as a helical span at residues 64–84 (IFPILVLFAVFANAAVALVLS). Over 85 to 97 (KKHMITPTNVVLK) the chain is Cytoplasmic. A helical transmembrane segment spans residues 98 to 118 (YMAIAELLVGLVPLPWTLFFF). Residues 119 to 140 (SMGNIKETHRLELWWCYLQKYS) are Extracellular-facing. Cysteine 134 and cysteine 225 are disulfide-bonded. Residues 141–161 (MDAFPPVFHMIAMWLTVLLAA) form a helical membrane-spanning segment. Residues 162 to 183 (QRYVSISHPLHSRSACNVKNVR) lie on the Cytoplasmic side of the membrane. The chain crosses the membrane as a helical span at residues 184-204 (LATMIITVTSFLCGLPKSFDY). At 205-251 (EYETVHGWIYSHGNWTYASSCVMMPTAILTNMGQTVYFNIYFWTRAL) the chain is on the extracellular side. A glycan (N-linked (GlcNAc...) asparagine) is linked at asparagine 218. Residues 252–272 (GFIILPSFLLVLLNGLLIKGI) traverse the membrane as a helical segment. Residues 273-301 (RRAQRRKLRLLREKRSEEAARQRDSNSTS) are Cytoplasmic-facing. Residues 302-322 (LMLVAIVSIFLIVNLPQAIFM) form a helical membrane-spanning segment. Topologically, residues 323–334 (GLLCVCETFTIK) are extracellular. The helical transmembrane segment at 335–355 (IPILEGTFPAVFLIASNMIVI) threads the bilayer. Topologically, residues 356–451 (ATYPINFGIY…TQFTTMDRSD (96 aa)) are cytoplasmic.

Belongs to the G-protein coupled receptor 1 family. As to expression, expressed in head neurons including the ASE sensory neurons and the ASI and AWB chemosensory neurons, the midbody neurons SDQ, and motor neurons in the tail.

The protein localises to the cell membrane. Its function is as follows. G-protein coupled receptor for the neuropeptide like protein nlp-38. Plays a role in several types of aversive gustatory associative learning including gustatory plasticity and salt avoidance learning. Its role in salt avoidance learning may be through activation of the transcription factor crh-1/CREB and de novo transcription and translation, which in turn promotes the formation of long-term memory. This Caenorhabditis elegans protein is Sex peptide receptor-related protein 2.